The primary structure comprises 316 residues: MAETEEEEDSEAWLRLKPVEPLPSQCCGSGCSPCVFDLYYRDLERWETARARNDRSLLSGKQPPESQSCSAKLSPETFLAFHISTMEKVTKDTYLVRFTLPGNSRLGLRPGQHLILRGVVDGLEIQRAYTPISPVTAEGYFDVLIKCYRTGLMSQYVESWRTGDTAFWRGPFGSFLYEPKKYGELLMLAAGTGLAPMVPILQSITDDEDDETFVTLVGCFKTFEGIYLKTFFQEQARFWNVQTFFVLSQEVSPEQLPWSYRDKTHFGRLGQELVAELVACCRRKPFTLVCGSPAFNEDMARCLLSAGLTEDSYFLF.

The Oxidoreductase-like domain occupies 17-53; the sequence is KPVEPLPSQCCGSGCSPCVFDLYYRDLERWETARARN. The region spanning 76–178 is the FAD-binding FR-type domain; that stretch reads ETFLAFHIST…RGPFGSFLYE (103 aa). Residues 158 to 173 and 183 to 215 contribute to the FAD site; these read ESWR…GPFG and GELL…TFVT.

Belongs to the flavoprotein pyridine nucleotide cytochrome reductase family. Requires FAD as cofactor.

It catalyses the reaction 2 Fe(III)-[cytochrome b5] + NADH = 2 Fe(II)-[cytochrome b5] + NAD(+) + H(+). Functionally, NADH-cytochrome b5 reductases are involved in desaturation and elongation of fatty acids, cholesterol biosynthesis, drug metabolism, and, in erythrocyte, methemoglobin reduction. The chain is NADH-cytochrome b5 reductase-like (Cyb5rl) from Mus musculus (Mouse).